A 114-amino-acid polypeptide reads, in one-letter code: Fluoride-specific ion channel FluC 2 (114 aa).

A run of 3 helical transmembrane segments spans residues 30-50 (FPVA…LLSG), 57-77 (TFAL…TFAV), and 88-108 (ALPS…AAWL). Na(+) contacts are provided by Gly-67 and Thr-70.

Belongs to the fluoride channel Fluc/FEX (TC 1.A.43) family.

It is found in the cell membrane. It catalyses the reaction fluoride(in) = fluoride(out). With respect to regulation, na(+) is not transported, but it plays an essential structural role and its presence is essential for fluoride channel function. In terms of biological role, fluoride-specific ion channel. Important for reducing fluoride concentration in the cell, thus reducing its toxicity. This Rhodococcus jostii (strain RHA1) protein is Fluoride-specific ion channel FluC 2.